The sequence spans 359 residues: MKTGSILAALVASASAHTIFQKVSVNGADQGQLKGIRAPANNNPVTDVMSSDIICNAVTMKDSNVLTVPAGAKVGHFWGHEIGGAAGPNDADNPIAASHKGPIMVYLAKVDNAATTGTSGLKWFKVAEAGLSNGKWAVDDLIANNGWSYFDMPTCIAPGQYLMRAELIALHNAGSQAGAQFYIGCAQINVTGGGSASPSNTVSFPGAYSASDPGILINIYGGSGKTDNGGKPYQIPGPALFTCPAGGSGGSSPAPATTASTPKPTSASAPKPVSTTASTPKPTNGSGSGTGAAHSTKCGGSKPAATTKASNPQPTNGGNSAVRAAALYGQCGGKGWTGPTSCASGTCKFSNDWYSQCLP.

The signal sequence occupies residues 1 to 16 (MKTGSILAALVASASA). The Cu(2+) site is built by His17 and His99. Intrachain disulfides connect Cys55–Cys185 and Cys155–Cys243. O2-binding residues include His171 and Gln180. Residue Tyr182 coordinates Cu(2+). Asn189 and Asn284 each carry an N-linked (GlcNAc...) asparagine glycan. Positions 244–320 (PAGGSGGSSP…NPQPTNGGNS (77 aa)) are disordered. The segment covering 251 to 296 (SSPAPATTASTPKPTSASAPKPVSTTASTPKPTNGSGSGTGAAHST) has biased composition (low complexity). Polar residues predominate over residues 307–319 (TKASNPQPTNGGN). In terms of domain architecture, CBM1 spans 323–358 (RAAALYGQCGGKGWTGPTSCASGTCKFSNDWYSQCL).

This sequence belongs to the polysaccharide monooxygenase AA9 family. Cu(2+) is required as a cofactor.

It localises to the secreted. The catalysed reaction is [(1-&gt;4)-beta-D-glucosyl]n+m + reduced acceptor + O2 = 4-dehydro-beta-D-glucosyl-[(1-&gt;4)-beta-D-glucosyl]n-1 + [(1-&gt;4)-beta-D-glucosyl]m + acceptor + H2O.. Its activity is regulated as follows. Activity in inhibited by excessive amounts of H(2)O(2). In terms of biological role, lytic polysaccharide monooxygenase (LPMO) that depolymerizes crystalline and amorphous polysaccharides via the oxidation of scissile alpha- or beta-(1-4)-glycosidic bonds, yielding C4 oxidation products. Catalysis by LPMOs requires the reduction of the active-site copper from Cu(II) to Cu(I) by a reducing agent and H(2)O(2) or O(2) as a cosubstrate. Degrades various hemicelluloses, in particular xyloglucan. Active on tamarind xyloglucan and konjac glucomannan. Acts on the glucose backbone of xyloglucan, accepting various substitutions (xylose, galactose) in almost allpositions. In contrast to all previously characterized LPMOs, which are active only on polysaccharides, is able to cleave soluble cello-oligosaccharides as short as a tetramer. The cello-oligosaccharide products released by this enzyme contain a C4 gemdiol/keto group at the non-reducing end. Binds to the inner wood cell wall layer and consumes enzymatically generated H(2)O(2). The protein is AA9 family lytic polysaccharide monooxygenase C (gh61-3) of Neurospora crassa (strain ATCC 24698 / 74-OR23-1A / CBS 708.71 / DSM 1257 / FGSC 987).